A 74-amino-acid chain; its full sequence is Large ribosomal subunit protein bL31 (74 aa).

Cys-16, Cys-18, Cys-38, and Cys-41 together coordinate Zn(2+).

It belongs to the bacterial ribosomal protein bL31 family. Type A subfamily. In terms of assembly, part of the 50S ribosomal subunit. Zn(2+) is required as a cofactor.

Functionally, binds the 23S rRNA. This chain is Large ribosomal subunit protein bL31, found in Mycolicibacterium vanbaalenii (strain DSM 7251 / JCM 13017 / BCRC 16820 / KCTC 9966 / NRRL B-24157 / PYR-1) (Mycobacterium vanbaalenii).